A 160-amino-acid chain; its full sequence is Transcriptional repressor NrdR (160 aa).

Residues 3-34 (CPYCQYEDTQVKDSRPAEEGAVIRRRRVCSVC) fold into a zinc finger. One can recognise an ATP-cone domain in the interval 49–139 (LLITKKNGRC…VYRDFRNASD (91 aa)).

The protein belongs to the NrdR family. It depends on Zn(2+) as a cofactor.

In terms of biological role, negatively regulates transcription of bacterial ribonucleotide reductase nrd genes and operons by binding to NrdR-boxes. The sequence is that of Transcriptional repressor NrdR from Bartonella tribocorum (strain CIP 105476 / IBS 506).